The primary structure comprises 327 residues: MKKNRMMIMICSVGVVWMLLVGGSYGEQCGRQAGGALCPGGNCCSQFGWCGSTTDYCGKDCQSQCGGPSPAPTDLSALISRSTFDQVLKHRNDGACPAKGFYTYDAFIAAAKAYPSFGNTGDTATRKREIAAFLGQTSHETTGGWATAPDGPYAWGYCFVRERNPSAYCSATPQFPCAPGQQYYGRGPIQISWNYNYGQCGRAIGVDLLNKPDLVATDSVISFKSALWFWMTAQSPKPSSHDVITSRWTPSSADVAARRLPGYGTVTNIINGGLECGRGQDSRVQDRIGFFKRYCDLLGVGYGNNLDCYSQTPFGNSLFLSDLVTSQ.

Positions 1–26 are cleaved as a signal peptide; sequence MKKNRMMIMICSVGVVWMLLVGGSYG. Positions 27–67 constitute a Chitin-binding type-1 domain; it reads EQCGRQAGGALCPGGNCCSQFGWCGSTTDYCGKDCQSQCGG. 7 disulfide bridges follow: cysteine 29–cysteine 44, cysteine 38–cysteine 50, cysteine 43–cysteine 57, cysteine 61–cysteine 65, cysteine 96–cysteine 158, cysteine 169–cysteine 177, and cysteine 276–cysteine 308. Catalysis depends on glutamate 140, which acts as the Proton donor. Residues 317-327 constitute a propeptide, removed in mature form; that stretch reads SLFLSDLVTSQ.

This sequence belongs to the glycosyl hydrolase 19 family. Chitinase class I subfamily.

It localises to the vacuole. The catalysed reaction is Random endo-hydrolysis of N-acetyl-beta-D-glucosaminide (1-&gt;4)-beta-linkages in chitin and chitodextrins.. In terms of biological role, defense against chitin-containing fungal pathogens. In Phaseolus vulgaris (Kidney bean), this protein is Endochitinase CH5B.